The primary structure comprises 284 residues: Formamidopyrimidine-DNA glycosylase (284 aa).

Pro-2 serves as the catalytic Schiff-base intermediate with DNA. Residue Glu-3 is the Proton donor of the active site. Lys-60 serves as the catalytic Proton donor; for beta-elimination activity. The DNA site is built by His-99, Arg-118, and Arg-163. The segment at 248–282 (WVYGRQGQPCRTCGQTIERIKLVGRSTHFCPQCQP) adopts an FPG-type zinc-finger fold. Arg-272 (proton donor; for delta-elimination activity) is an active-site residue.

The protein belongs to the FPG family. In terms of assembly, monomer. Requires Zn(2+) as cofactor.

It catalyses the reaction Hydrolysis of DNA containing ring-opened 7-methylguanine residues, releasing 2,6-diamino-4-hydroxy-5-(N-methyl)formamidopyrimidine.. It carries out the reaction 2'-deoxyribonucleotide-(2'-deoxyribose 5'-phosphate)-2'-deoxyribonucleotide-DNA = a 3'-end 2'-deoxyribonucleotide-(2,3-dehydro-2,3-deoxyribose 5'-phosphate)-DNA + a 5'-end 5'-phospho-2'-deoxyribonucleoside-DNA + H(+). Functionally, involved in base excision repair of DNA damaged by oxidation or by mutagenic agents. Acts as a DNA glycosylase that recognizes and removes damaged bases. Has a preference for oxidized purines, such as 7,8-dihydro-8-oxoguanine (8-oxoG). Has AP (apurinic/apyrimidinic) lyase activity and introduces nicks in the DNA strand. Cleaves the DNA backbone by beta-delta elimination to generate a single-strand break at the site of the removed base with both 3'- and 5'-phosphates. In Acaryochloris marina (strain MBIC 11017), this protein is Formamidopyrimidine-DNA glycosylase.